Here is a 200-residue protein sequence, read N- to C-terminus: MKVLVTGFEPFGGDDKNPTMEIVKFLDGKEIGGAKVIGRVLPVSFKRARKELVAILDEIKPDVTINLGLAPGRTHISVERVAVNIIDARIPDNDGEKPIDEPIVENGPAAYFATIPTREIVEEMKRNNIPAVLSYTAGTYLCNFVMYLTLHHSATKGYPRKAGFIHVPYTPDQVIEKKNTPSMSLELEIKGVEIAIRKSL.

Active-site residues include Glu79, Cys142, and His166.

Belongs to the peptidase C15 family. As to quaternary structure, homotetramer.

The protein localises to the cytoplasm. The enzyme catalyses Release of an N-terminal pyroglutamyl group from a polypeptide, the second amino acid generally not being Pro.. Removes 5-oxoproline from various penultimate amino acid residues except L-proline. The polypeptide is Pyrrolidone-carboxylate peptidase (pcp) (Pyrococcus abyssi (strain GE5 / Orsay)).